We begin with the raw amino-acid sequence, 69 residues long: Pancreatic propolypeptide YG (69 aa).

The protein belongs to the NPY family.

It localises to the secreted. The chain is Pancreatic propolypeptide YG from Lophius americanus (American angler).